The following is a 143-amino-acid chain: ATP synthase epsilon chain (143 aa).

The protein belongs to the ATPase epsilon chain family. As to quaternary structure, F-type ATPases have 2 components, CF(1) - the catalytic core - and CF(0) - the membrane proton channel. CF(1) has five subunits: alpha(3), beta(3), gamma(1), delta(1), epsilon(1). CF(0) has three main subunits: a, b and c.

It is found in the cell inner membrane. Produces ATP from ADP in the presence of a proton gradient across the membrane. The chain is ATP synthase epsilon chain from Dichelobacter nodosus (strain VCS1703A).